The primary structure comprises 401 residues: Probable tRNA sulfurtransferase (401 aa).

A THUMP domain is found at 60–165 (EALFPHLKQV…EEATFLTIRD (106 aa)). ATP is bound by residues 183–184 (ML), 208–209 (HF), Arg265, Gly287, and Gln296.

The protein belongs to the ThiI family.

Its subcellular location is the cytoplasm. The catalysed reaction is [ThiI sulfur-carrier protein]-S-sulfanyl-L-cysteine + a uridine in tRNA + 2 reduced [2Fe-2S]-[ferredoxin] + ATP + H(+) = [ThiI sulfur-carrier protein]-L-cysteine + a 4-thiouridine in tRNA + 2 oxidized [2Fe-2S]-[ferredoxin] + AMP + diphosphate. It catalyses the reaction [ThiS sulfur-carrier protein]-C-terminal Gly-Gly-AMP + S-sulfanyl-L-cysteinyl-[cysteine desulfurase] + AH2 = [ThiS sulfur-carrier protein]-C-terminal-Gly-aminoethanethioate + L-cysteinyl-[cysteine desulfurase] + A + AMP + 2 H(+). Its pathway is cofactor biosynthesis; thiamine diphosphate biosynthesis. Functionally, catalyzes the ATP-dependent transfer of a sulfur to tRNA to produce 4-thiouridine in position 8 of tRNAs, which functions as a near-UV photosensor. Also catalyzes the transfer of sulfur to the sulfur carrier protein ThiS, forming ThiS-thiocarboxylate. This is a step in the synthesis of thiazole, in the thiamine biosynthesis pathway. The sulfur is donated as persulfide by IscS. This chain is Probable tRNA sulfurtransferase, found in Bacillus subtilis (strain 168).